Reading from the N-terminus, the 262-residue chain is Sulfur carrier protein FdhD (262 aa).

Cys105 functions as the Cysteine persulfide intermediate in the catalytic mechanism. 246 to 251 (FVRKNR) serves as a coordination point for Mo-bis(molybdopterin guanine dinucleotide).

It belongs to the FdhD family.

It localises to the cytoplasm. Functionally, required for formate dehydrogenase (FDH) activity. Acts as a sulfur carrier protein that transfers sulfur from IscS to the molybdenum cofactor prior to its insertion into FDH. The protein is Sulfur carrier protein FdhD of Picrophilus torridus (strain ATCC 700027 / DSM 9790 / JCM 10055 / NBRC 100828 / KAW 2/3).